The sequence spans 215 residues: UPF0502 protein Ping_1905 (215 aa).

The protein belongs to the UPF0502 family.

The chain is UPF0502 protein Ping_1905 from Psychromonas ingrahamii (strain DSM 17664 / CCUG 51855 / 37).